We begin with the raw amino-acid sequence, 402 residues long: Iripin-8 (402 aa).

Residues 1–16 form the signal peptide; sequence MTRLLWLFAAITASLA. 2 N-linked (GlcNAc...) asparagine glycosylation sites follow: Asn-164 and Asn-230.

Belongs to the serpin family. In terms of assembly, interacts with host thrombin/F2. Interacts with host coagulation factor VII/F7 (activated). Interacts with host coagulation factor X/F10 (activated). Interacts with host coagulation factor XII/F12 (activated). Interacts with host coagulation factor IX/F9 (activated). Interacts with host plasmin/PLG. Interacts with host protein C/PROC (activated). Saliva (at protein level). Salivary gland. Midgut. Low-level expression in ovary.

It localises to the secreted. Its function is as follows. Serine protease inhibitor that modulates blood feeding of ticks on vertebrate species. Inhibits the intrinsic and common pathways of blood coagulation in the host. Inhibits host thrombin, factor VIIa, factor Xa, factor XIa, factor XIIa, plasmin and activated protein C. Inhibits host trypsin and kallikrein. Reduces host complement activity. Does not affect proliferation of CD4+ T-cells and neutrophil migration. The polypeptide is Iripin-8 (Ixodes ricinus (Common tick)).